The sequence spans 178 residues: Cytochrome b6-f complex iron-sulfur subunit 1 (178 aa).

A helical transmembrane segment spans residues 17–36 (LLNFLAGTTVAVTASAGAYA). In terms of domain architecture, Rieske spans 61–161 (GNPIPASQIL…VAVVDDQIFI (101 aa)). [2Fe-2S] cluster-binding residues include C107, H109, C125, and H128. A disulfide bridge connects residues C112 and C127.

It belongs to the Rieske iron-sulfur protein family. In terms of assembly, the 4 large subunits of the cytochrome b6-f complex are cytochrome b6, subunit IV (17 kDa polypeptide, PetD), cytochrome f and the Rieske protein, while the 4 small subunits are PetG, PetL, PetM and PetN. The complex functions as a dimer. Requires [2Fe-2S] cluster as cofactor.

It is found in the cellular thylakoid membrane. The enzyme catalyses 2 oxidized [plastocyanin] + a plastoquinol + 2 H(+)(in) = 2 reduced [plastocyanin] + a plastoquinone + 4 H(+)(out). Functionally, component of the cytochrome b6-f complex, which mediates electron transfer between photosystem II (PSII) and photosystem I (PSI), cyclic electron flow around PSI, and state transitions. In Synechocystis sp. (strain ATCC 27184 / PCC 6803 / Kazusa), this protein is Cytochrome b6-f complex iron-sulfur subunit 1.